We begin with the raw amino-acid sequence, 39 residues long: Photosystem II reaction center protein L (39 aa).

The helical transmembrane segment at 18–38 (SLYLGLLLVAVLGILFSSYFF) threads the bilayer.

The protein belongs to the PsbL family. PSII is composed of 1 copy each of membrane proteins PsbA, PsbB, PsbC, PsbD, PsbE, PsbF, PsbH, PsbI, PsbJ, PsbK, PsbL, PsbM, PsbT, PsbX, PsbY, PsbZ, Psb30/Ycf12, peripheral proteins PsbO, CyanoQ (PsbQ), PsbU, PsbV and a large number of cofactors. It forms dimeric complexes.

Its subcellular location is the cellular thylakoid membrane. Its function is as follows. One of the components of the core complex of photosystem II (PSII). PSII is a light-driven water:plastoquinone oxidoreductase that uses light energy to abstract electrons from H(2)O, generating O(2) and a proton gradient subsequently used for ATP formation. It consists of a core antenna complex that captures photons, and an electron transfer chain that converts photonic excitation into a charge separation. This subunit is found at the monomer-monomer interface and is required for correct PSII assembly and/or dimerization. The chain is Photosystem II reaction center protein L from Rippkaea orientalis (strain PCC 8801 / RF-1) (Cyanothece sp. (strain PCC 8801)).